Consider the following 187-residue polypeptide: MKIAQEIRVGNVIMIGKDPMVVLKTEFNKSGRNSAVVKMKMKNLLSGAGAETVFKADDKLDTVQLERKECTYSYFADPMYVFMDTEYNQYDIEKENLGDVLNYLIDGMEDICEVTFYDGKAISMELPITIVREVEYTEPSVRGDTSGKVMKPAKLKGTDATISVADFVKIGDKIEIDTRTGEFKRRV.

It belongs to the elongation factor P family.

The protein resides in the cytoplasm. It participates in protein biosynthesis; polypeptide chain elongation. Functionally, involved in peptide bond synthesis. Stimulates efficient translation and peptide-bond synthesis on native or reconstituted 70S ribosomes in vitro. Probably functions indirectly by altering the affinity of the ribosome for aminoacyl-tRNA, thus increasing their reactivity as acceptors for peptidyl transferase. This chain is Elongation factor P, found in Tolumonas auensis (strain DSM 9187 / NBRC 110442 / TA 4).